The chain runs to 232 residues: Small ribosomal subunit protein uS3 (232 aa).

Positions isoleucine 39–lysine 107 constitute a KH type-2 domain. Residues glutamine 213–glutamate 232 form a disordered region. The span at glycine 222–glutamate 232 shows a compositional bias: basic residues.

It belongs to the universal ribosomal protein uS3 family. As to quaternary structure, part of the 30S ribosomal subunit. Forms a tight complex with proteins S10 and S14.

In terms of biological role, binds the lower part of the 30S subunit head. Binds mRNA in the 70S ribosome, positioning it for translation. This chain is Small ribosomal subunit protein uS3, found in Sulfurovum sp. (strain NBC37-1).